The primary structure comprises 494 residues: Cytochrome P450 2A6 (494 aa).

Positions 107 and 297 each coordinate substrate. C439 contributes to the heme binding site.

The protein belongs to the cytochrome P450 family. It depends on heme as a cofactor. As to expression, liver.

The protein localises to the endoplasmic reticulum membrane. The protein resides in the microsome membrane. It catalyses the reaction 1,4-cineole + reduced [NADPH--hemoprotein reductase] + O2 = 2-exo-hydroxy-1,4-cineole + oxidized [NADPH--hemoprotein reductase] + H2O + H(+). Exhibits a high coumarin 7-hydroxylase activity. Can act in the hydroxylation of the anti-cancer drugs cyclophosphamide and ifosphamide. Competent in the metabolic activation of aflatoxin B1. Constitutes the major nicotine C-oxidase. Acts as a 1,4-cineole 2-exo-monooxygenase. Possesses low phenacetin O-deethylation activity. This Homo sapiens (Human) protein is Cytochrome P450 2A6 (CYP2A6).